The following is a 169-amino-acid chain: GSK-3-binding protein (169 aa).

The tract at residues 75–100 (TPRGAARHAQHHHHHSPRQQGTGGNK) is disordered. The segment covering 79-91 (AARHAQHHHHHSP) has biased composition (basic residues). Residues 122–145 (DDPHELLQELLLSGNLIKEAVRRL) form an involved in GSK-3 binding region. A disordered region spans residues 147–169 (MAGESPDPPGSRRVSECTETTVQ).

Belongs to the GSK-3-binding protein family.

In terms of biological role, binds GSK-3 and prevents GSK-3-dependent phosphorylation. Regulates the stability of beta-catenin in embryos. Maternal GBP is required for dorsal-ventral axis formation. In Xenopus laevis (African clawed frog), this protein is GSK-3-binding protein (gbp).